The sequence spans 780 residues: Mediator of RNA polymerase II transcription subunit 15 (780 aa).

An interaction with nhr-49 region spans residues 1-124; sequence MSEEDWPSPK…PQPTSAQARN (124 aa). Residues 2 to 96 form an interaction with sbp-1 region; that stretch reads SEEDWPSPKF…SPPCTTAALL (95 aa). 3 disordered regions span residues 91–152, 166–363, and 564–597; these read TTAA…APSA, PSPD…QGMM, and GPGP…GTPN. Residues 125-139 are compositionally biased toward low complexity; the sequence is PPVTVATTQASTTPS. The span at 225-245 shows a compositional bias: gly residues; it reads PPNGYGGYGMMNGPPGSGAPM. Residues 296 to 316 are compositionally biased toward polar residues; that stretch reads QGATPTGPSSVLESLINQPQQ. Composition is skewed to low complexity over residues 333–353 and 574–594; these read AAQR…QQQR and SMSG…NPMG.

The protein belongs to the Mediator complex subunit 15 family. Component of the Mediator complex. Interacts with nhr-49, nhr-64 and sbp-1. Expressed in the intestine and head neurons.

It is found in the nucleus. Its function is as follows. Component of the Mediator complex, a coactivator involved in regulated gene transcription of nearly all RNA polymerase II-dependent genes. Mediator functions as a bridge to convey information from gene-specific regulatory proteins to the basal RNA polymerase II transcription machinery. Mediator is recruited to promoters by direct interactions with regulatory proteins and serves as a scaffold for the assembly of a functional preinitiation complex with RNA polymerase II and the general transcription factors. Required for regulated expression of genes controlling fatty acid desaturation by transcription factors including sbp-1 and nhr-49. Involved in the response to simulated microgravity, in concert with sbp-1, probably acting in the intestine. In Caenorhabditis elegans, this protein is Mediator of RNA polymerase II transcription subunit 15 (mdt-15).